Here is a 462-residue protein sequence, read N- to C-terminus: ATP synthase subunit beta (462 aa).

152–159 contributes to the ATP binding site; sequence GGAGVGKT.

Belongs to the ATPase alpha/beta chains family. In terms of assembly, F-type ATPases have 2 components, CF(1) - the catalytic core - and CF(0) - the membrane proton channel. CF(1) has five subunits: alpha(3), beta(3), gamma(1), delta(1), epsilon(1). CF(0) has three main subunits: a(1), b(2) and c(9-12). The alpha and beta chains form an alternating ring which encloses part of the gamma chain. CF(1) is attached to CF(0) by a central stalk formed by the gamma and epsilon chains, while a peripheral stalk is formed by the delta and b chains.

Its subcellular location is the cell inner membrane. It catalyses the reaction ATP + H2O + 4 H(+)(in) = ADP + phosphate + 5 H(+)(out). Produces ATP from ADP in the presence of a proton gradient across the membrane. The catalytic sites are hosted primarily by the beta subunits. The polypeptide is ATP synthase subunit beta (Aeromonas hydrophila subsp. hydrophila (strain ATCC 7966 / DSM 30187 / BCRC 13018 / CCUG 14551 / JCM 1027 / KCTC 2358 / NCIMB 9240 / NCTC 8049)).